We begin with the raw amino-acid sequence, 698 residues long: Zinc finger CCCH domain-containing protein 7 (698 aa).

Residues 1 to 11 are compositionally biased toward pro residues; sequence MEEPSPVPPAA. 4 disordered regions span residues 1–23, 56–95, 109–137, and 272–300; these read MEEP…PPTT, HAAR…GGDR, APHE…PQGT, and GSLD…SGNS. Composition is skewed to low complexity over residues 12-21 and 65-74; these read APASLAAAPP and EPAAAAAIPP. Acidic residues predominate over residues 281–300; it reads EEGEIEGDTQNLDADDSGNS. 3 consecutive C3H1-type zinc fingers follow at residues 429 to 456, 458 to 485, and 486 to 511; these read PKVV…HDTT, LTKS…HELS, and KYPC…HVIP. 2 disordered regions span residues 512–553 and 607–682; these read TAEG…GEPA and TEKH…QHEV. Polar residues-rich tracts occupy residues 535–548 and 665–680; these read CQEQ…STVY and SLPT…STQH.

This chain is Zinc finger CCCH domain-containing protein 7, found in Oryza sativa subsp. japonica (Rice).